Here is a 1190-residue protein sequence, read N- to C-terminus: Laminin subunit gamma-2 (1190 aa).

Positions 1–21 (MPALWLRCGLCLALLLPAARA) are cleaved as a signal peptide. Disulfide bonds link C28–C37, C30–C53, C56–C65, C68–C81, C84–C96, C86–C102, C104–C113, C116–C128, C139–C150, C141–C155, C157–C166, and C169–C184. Laminin EGF-like domains are found at residues 28 to 83 (CDCN…RCLP), 84 to 130 (CNCN…GCAQ), and 139 to 186 (CDCD…GCTQ). The Laminin EGF-like 4; first part domain maps to 187 to 196 (CFCYGHSASC). One can recognise a Laminin IV type A domain in the interval 213 to 381 (QDVDGWKAVQ…SGAPAPWVEQ (169 aa)). Residues N342 and N362 are each glycosylated (N-linked (GlcNAc...) asparagine). One can recognise a Laminin EGF-like 4; second part domain in the interval 382-415 (CVCPVGYKGQFCQDCASGYKRDSARLGPFGTCIP). Laminin EGF-like domains follow at residues 416 to 462 (CNCQ…SCKP), 463 to 517 (CPCR…PCQP), and 518 to 573 (CQCN…KCRA). Intrachain disulfides connect C463–C471, C465–C482, C485–C494, C497–C515, C518–C532, C520–C539, C542–C551, C554–C571, C574–C586, C576–C592, and C594–C603. Residues 574-603 (CNCNPVGSEPVECRSDGSCVCKPGFGGLSC) enclose the Laminin EGF-like 8; truncated domain. The tract at residues 604–1190 (EHAALTSCPA…CYNTQALEQQ (587 aa)) is domain II and I. Positions 613–718 (ACYNQVKVQM…GSQYQNQVQD (106 aa)) form a coiled coil. S803 is a glycosylation site (O-linked (Xyl...) (chondroitin sulfate) serine). Coiled coils occupy residues 809–1073 (AVVQ…AVQM) and 1114–1190 (EERL…LEQQ). N939 and N1030 each carry an N-linked (GlcNAc...) asparagine glycan.

As to quaternary structure, laminin is a complex glycoprotein, consisting of three different polypeptide chains (alpha, beta, gamma), which are bound to each other by disulfide bonds into a cross-shaped molecule comprising one long and three short arms with globules at each end. Gamma-2 is a subunit of laminin-5 (laminin-332 or epiligrin/kalinin/nicein). In terms of processing, O-glycosylated; contains chondroitin sulfate (CS).

The protein resides in the secreted. It is found in the extracellular space. The protein localises to the extracellular matrix. Its subcellular location is the basement membrane. Its function is as follows. Binding to cells via a high affinity receptor, laminin is thought to mediate the attachment, migration and organization of cells into tissues during embryonic development by interacting with other extracellular matrix components. Ladsin exerts cell-scattering activity toward a wide variety of cells, including epithelial, endothelial, and fibroblastic cells. The chain is Laminin subunit gamma-2 (LAMC2) from Equus caballus (Horse).